We begin with the raw amino-acid sequence, 607 residues long: ATP-dependent RNA helicase DBP6 (607 aa).

Positions 1-83 are disordered; it reads MFAARFDPSR…GTGEADKRHQ (83 aa). The span at 34–59 shows a compositional bias: acidic residues; that stretch reads QDESESEMSSAESEDEAMQLDDEEEV. Residues 60 to 69 are compositionally biased toward basic and acidic residues; it reads VDSKGKENHG. The Q motif signature appears at 184–192; it reads AFPIQTALL. The 181-residue stretch at 208–388 folds into the Helicase ATP-binding domain; it reads RYYTRKVGDI…DLQLHNPKLF (181 aa). 221-228 serves as a coordination point for ATP; the sequence is ASTGSGKT. Positions 328 to 331 match the DEAD box motif; it reads DEAD. One can recognise a Helicase C-terminal domain in the interval 419 to 578; that stretch reads ILLRLLPLLS…GSHLFFDEEQ (160 aa).

The protein belongs to the DEAD box helicase family. DDX51/DBP6 subfamily. Associated with pre-ribosomal particles.

It is found in the nucleus. The protein resides in the nucleolus. It catalyses the reaction ATP + H2O = ADP + phosphate + H(+). ATP-binding RNA helicase involved in the biogenesis of 60S ribosomal subunits and is required for the normal formation of 25S and 5.8S rRNAs. This chain is ATP-dependent RNA helicase DBP6 (DBP6), found in Eremothecium gossypii (strain ATCC 10895 / CBS 109.51 / FGSC 9923 / NRRL Y-1056) (Yeast).